Reading from the N-terminus, the 161-residue chain is Cyclic pyranopterin monophosphate synthase (161 aa).

Substrate is bound by residues 75–77 and 113–114; these read LCH and ME. The active site involves Asp128.

The protein belongs to the MoaC family. As to quaternary structure, homohexamer; trimer of dimers.

It carries out the reaction (8S)-3',8-cyclo-7,8-dihydroguanosine 5'-triphosphate = cyclic pyranopterin phosphate + diphosphate. It functions in the pathway cofactor biosynthesis; molybdopterin biosynthesis. In terms of biological role, catalyzes the conversion of (8S)-3',8-cyclo-7,8-dihydroguanosine 5'-triphosphate to cyclic pyranopterin monophosphate (cPMP). The polypeptide is Cyclic pyranopterin monophosphate synthase (Cupriavidus pinatubonensis (strain JMP 134 / LMG 1197) (Cupriavidus necator (strain JMP 134))).